The primary structure comprises 365 residues: Sulfotransferase 2B1 (365 aa).

A 3'-phosphoadenylyl sulfate-binding site is contributed by 70-75 (KSGTTW). 3 residues coordinate substrate: Trp98, Trp103, and His125. The Proton acceptor role is filled by His125. Residues Arg147, Ser155, Tyr210, 244-249 (STFSAM), and 274-276 (RKG) contribute to the 3'-phosphoadenylyl sulfate site. Residues 303–365 (GMPTFPWDED…ASETPHPRPS (63 aa)) are disordered. A compositionally biased stretch (acidic residues) spans 309-325 (WDEDPEEDGSPDPEPSP). A Phosphoserine modification is found at Ser348.

Belongs to the sulfotransferase 1 family. Phosphorylated. In terms of tissue distribution, expressed in the stratum granulosum-stratum corneum junction in the skin (at protein level). Expressed highly in placenta, prostate and trachea and lower expression in the small intestine and lung.

It localises to the cytoplasm. The protein localises to the cytosol. It is found in the microsome. The protein resides in the nucleus. The catalysed reaction is an alcohol + 3'-phosphoadenylyl sulfate = an alkyl sulfate + adenosine 3',5'-bisphosphate + H(+). It catalyses the reaction 3beta-hydroxyandrost-5-en-17-one + 3'-phosphoadenylyl sulfate = dehydroepiandrosterone 3-sulfate + adenosine 3',5'-bisphosphate + H(+). It carries out the reaction (24S)-hydroxycholesterol + 3'-phosphoadenylyl sulfate = (24S)-hydroxycholesterol 3-sulfate + adenosine 3',5'-bisphosphate + H(+). The enzyme catalyses cholesterol + 3'-phosphoadenylyl sulfate = cholesterol sulfate + adenosine 3',5'-bisphosphate + H(+). The catalysed reaction is pregnenolone + 3'-phosphoadenylyl sulfate = pregnenolone sulfate + adenosine 3',5'-bisphosphate + H(+). In terms of biological role, sulfotransferase that utilizes 3'-phospho-5'-adenylyl sulfate (PAPS) as sulfonate donor to catalyze the sulfate conjugation. Responsible for the sulfation of cholesterol. Catalyzes sulfation of the 3beta-hydroxyl groups of steroids, such as, pregnenolone and dehydroepiandrosterone (DHEA). Preferentially sulfonates cholesterol, while it also has significant activity with pregnenolone and DHEA. Plays a role in epidermal cholesterol metabolism and in the regulation of epidermal proliferation and differentiation. Functionally, sulfonates pregnenolone but not cholesterol. This is Sulfotransferase 2B1 (SULT2B1) from Homo sapiens (Human).